Reading from the N-terminus, the 162-residue chain is Interleukin-15 (162 aa).

Positions 1–29 (MRISKPSLRSTSIQCYLCFLLNSHLITEA) are cleaved as a signal peptide. Residues 30–48 (GIHVFVWGCISAGLPKTEA) constitute a propeptide that is removed on maturation. Disulfide bonds link Cys-83/Cys-133 and Cys-90/Cys-136. N-linked (GlcNAc...) asparagine glycosylation is found at Asn-119 and Asn-127.

It belongs to the IL-15/IL-21 family.

It localises to the secreted. Cytokine that plays a major role in the development of inflammatory and protective immune responses to microbial invaders and parasites by modulating immune cells of both the innate and adaptive immune systems. Stimulates the proliferation of natural killer cells, T-cells and B-cells and promotes the secretion of several cytokines. In monocytes, induces the production of IL8 and monocyte chemotactic protein 1/CCL2, two chemokines that attract neutrophils and monocytes respectively to sites of infection. Unlike most cytokines, which are secreted in soluble form, IL15 is expressed in association with its high affinity IL15RA on the surface of IL15-producing cells and delivers signals to target cells that express IL2RB and IL2RG receptor subunits. Binding to its receptor triggers the phosphorylation of JAK1 and JAK3 and the recruitment and subsequent phosphorylation of signal transducer and activator of transcription-3/STAT3 and STAT5. In mast cells, induces the rapid tyrosine phosphorylation of STAT6 and thereby controls mast cell survival and release of cytokines such as IL4. This chain is Interleukin-15 (IL15), found in Cavia porcellus (Guinea pig).